Reading from the N-terminus, the 402-residue chain is Putative F-box/kelch-repeat protein At1g61540 (402 aa).

In terms of domain architecture, F-box spans 24–70 (PISIMSLPYDLLLNCFSLVSRLYYPTLSLVSKTFRSIITSRELYEIR). Kelch repeat units lie at residues 135-189 (NIYK…CEVD), 191-240 (KIYI…EVKS), and 246-293 (KIYM…VVDN).

The protein is Putative F-box/kelch-repeat protein At1g61540 of Arabidopsis thaliana (Mouse-ear cress).